Here is a 217-residue protein sequence, read N- to C-terminus: Zinc finger CCHC-type and RNA-binding motif-containing protein 1 (217 aa).

Positions 10-88 (STVYVSNLPF…RVIKASIAID (79 aa)) constitute an RRM domain. Residues 105-122 (SKCYECGESGHLSYACPK) form a CCHC-type zinc finger. Positions 120–217 (CPKNMLGERE…YFSDEEELSD (98 aa)) are disordered. The span at 145–163 (PEEEIEEVEESEDEGEDPA) shows a compositional bias: acidic residues. A phosphoserine mark is found at Ser-155, Ser-210, and Ser-216.

In terms of assembly, component of the U11/U12 snRNPs that are part of the U12-type spliceosome.

Its subcellular location is the nucleus. The protein localises to the nucleoplasm. This Homo sapiens (Human) protein is Zinc finger CCHC-type and RNA-binding motif-containing protein 1 (ZCRB1).